The sequence spans 290 residues: Porphobilinogen deaminase (290 aa).

At C238 the chain carries S-(dipyrrolylmethanemethyl)cysteine.

Belongs to the HMBS family. Monomer. The cofactor is dipyrromethane.

The enzyme catalyses 4 porphobilinogen + H2O = hydroxymethylbilane + 4 NH4(+). It functions in the pathway porphyrin-containing compound metabolism; protoporphyrin-IX biosynthesis; coproporphyrinogen-III from 5-aminolevulinate: step 2/4. Its function is as follows. Tetrapolymerization of the monopyrrole PBG into the hydroxymethylbilane pre-uroporphyrinogen in several discrete steps. The sequence is that of Porphobilinogen deaminase from Clostridium botulinum (strain Eklund 17B / Type B).